Reading from the N-terminus, the 169-residue chain is PTS system glucose-specific EIIA component (169 aa).

Positions aspartate 39–asparagine 143 constitute a PTS EIIA type-1 domain. Residues histidine 76 and histidine 91 each contribute to the Zn(2+) site. Catalysis depends on histidine 91, which acts as the Tele-phosphohistidine intermediate; for EIIA activity. Histidine 91 is subject to Phosphohistidine; by HPr.

In terms of assembly, heterodimer with glycerol kinase (glpk). Zn(2+) is required as a cofactor.

It localises to the cytoplasm. In terms of biological role, the phosphoenolpyruvate-dependent sugar phosphotransferase system (sugar PTS), a major carbohydrate active transport system, catalyzes the phosphorylation of incoming sugar substrates concomitantly with their translocation across the cell membrane. The enzyme II complex composed of PtsG and Crr is involved in glucose transport. In Escherichia coli O6:H1 (strain CFT073 / ATCC 700928 / UPEC), this protein is PTS system glucose-specific EIIA component (crr).